Consider the following 433-residue polypeptide: 3-phosphoshikimate 1-carboxyvinyltransferase (433 aa).

K23, S24, and R28 together coordinate 3-phosphoshikimate. K23 serves as a coordination point for phosphoenolpyruvate. Positions 95 and 123 each coordinate phosphoenolpyruvate. 4 residues coordinate 3-phosphoshikimate: S167, Q169, D317, and K344. Residue Q169 coordinates phosphoenolpyruvate. D317 serves as the catalytic Proton acceptor. Residues R348 and R390 each contribute to the phosphoenolpyruvate site.

The protein belongs to the EPSP synthase family. In terms of assembly, monomer.

The protein localises to the cytoplasm. It carries out the reaction 3-phosphoshikimate + phosphoenolpyruvate = 5-O-(1-carboxyvinyl)-3-phosphoshikimate + phosphate. The protein operates within metabolic intermediate biosynthesis; chorismate biosynthesis; chorismate from D-erythrose 4-phosphate and phosphoenolpyruvate: step 6/7. Functionally, catalyzes the transfer of the enolpyruvyl moiety of phosphoenolpyruvate (PEP) to the 5-hydroxyl of shikimate-3-phosphate (S3P) to produce enolpyruvyl shikimate-3-phosphate and inorganic phosphate. This Staphylococcus epidermidis (strain ATCC 35984 / DSM 28319 / BCRC 17069 / CCUG 31568 / BM 3577 / RP62A) protein is 3-phosphoshikimate 1-carboxyvinyltransferase.